A 790-amino-acid chain; its full sequence is Exocyst complex component SEC15A (790 aa).

Residues 49–70 (LVHQLKNVARKKEAEIEDLCKT) are a coiled coil.

This sequence belongs to the SEC15 family. In terms of assembly, the exocyst complex is composed of SEC3, SEC5, SEC6, SEC8, SEC10, EXO70A1 and EXO84B.

It is found in the cytoplasm. The protein resides in the cytosol. Its function is as follows. Component of the exocyst complex involved in the docking of exocytic vesicles with fusion sites on the plasma membrane during regulated or polarized secretion. Involved in polarized cell growth and organ morphogenesis. During cytokinesis, involved in cell plate initiation, cell plate maturation and formation of new primary cell wall. The protein is Exocyst complex component SEC15A (SEC15A) of Arabidopsis thaliana (Mouse-ear cress).